Here is a 147-residue protein sequence, read N- to C-terminus: Flagellar assembly factor FliW (147 aa).

It belongs to the FliW family. As to quaternary structure, interacts with translational regulator CsrA and flagellin(s).

Its subcellular location is the cytoplasm. Acts as an anti-CsrA protein, binds CsrA and prevents it from repressing translation of its target genes, one of which is flagellin. Binds to flagellin and participates in the assembly of the flagellum. This is Flagellar assembly factor FliW from Oceanobacillus iheyensis (strain DSM 14371 / CIP 107618 / JCM 11309 / KCTC 3954 / HTE831).